The chain runs to 363 residues: NAD(P)H-quinone oxidoreductase subunit 1, chloroplastic (363 aa).

8 helical membrane passes run L30 to L50, F98 to F118, L127 to M147, A165 to L185, F203 to L223, Y248 to S268, V300 to I320, and L336 to T356.

The protein belongs to the complex I subunit 1 family. In terms of assembly, NDH is composed of at least 16 different subunits, 5 of which are encoded in the nucleus.

The protein localises to the plastid. The protein resides in the chloroplast thylakoid membrane. It catalyses the reaction a plastoquinone + NADH + (n+1) H(+)(in) = a plastoquinol + NAD(+) + n H(+)(out). The enzyme catalyses a plastoquinone + NADPH + (n+1) H(+)(in) = a plastoquinol + NADP(+) + n H(+)(out). Functionally, NDH shuttles electrons from NAD(P)H:plastoquinone, via FMN and iron-sulfur (Fe-S) centers, to quinones in the photosynthetic chain and possibly in a chloroplast respiratory chain. The immediate electron acceptor for the enzyme in this species is believed to be plastoquinone. Couples the redox reaction to proton translocation, and thus conserves the redox energy in a proton gradient. The polypeptide is NAD(P)H-quinone oxidoreductase subunit 1, chloroplastic (Solanum bulbocastanum (Wild potato)).